A 427-amino-acid polypeptide reads, in one-letter code: Glutamyl-tRNA reductase (427 aa).

Substrate is bound by residues Thr49 to Arg52, Ser109, Glu114 to Gln116, and Gln120. The active-site Nucleophile is the Cys50. Gly188–Ala193 provides a ligand contact to NADP(+).

Belongs to the glutamyl-tRNA reductase family. In terms of assembly, homodimer.

The enzyme catalyses (S)-4-amino-5-oxopentanoate + tRNA(Glu) + NADP(+) = L-glutamyl-tRNA(Glu) + NADPH + H(+). It functions in the pathway porphyrin-containing compound metabolism; protoporphyrin-IX biosynthesis; 5-aminolevulinate from L-glutamyl-tRNA(Glu): step 1/2. Its pathway is porphyrin-containing compound metabolism; chlorophyll biosynthesis. Its activity is regulated as follows. Feedback inhibition by heme. Functionally, catalyzes the NADPH-dependent reduction of glutamyl-tRNA(Glu) to glutamate 1-semialdehyde (GSA). This chain is Glutamyl-tRNA reductase, found in Synechocystis sp. (strain ATCC 27184 / PCC 6803 / Kazusa).